A 426-amino-acid chain; its full sequence is Histidine--tRNA ligase (426 aa).

Belongs to the class-II aminoacyl-tRNA synthetase family. Homodimer.

Its subcellular location is the cytoplasm. The catalysed reaction is tRNA(His) + L-histidine + ATP = L-histidyl-tRNA(His) + AMP + diphosphate + H(+). The sequence is that of Histidine--tRNA ligase from Geobacillus kaustophilus (strain HTA426).